A 177-amino-acid chain; its full sequence is ATP-dependent protease subunit HslV (177 aa).

Thr-7 is a catalytic residue. Residues Ala-162, Cys-165, and Thr-168 each contribute to the Na(+) site.

It belongs to the peptidase T1B family. HslV subfamily. As to quaternary structure, a double ring-shaped homohexamer of HslV is capped on each side by a ring-shaped HslU homohexamer. The assembly of the HslU/HslV complex is dependent on binding of ATP.

It is found in the cytoplasm. It carries out the reaction ATP-dependent cleavage of peptide bonds with broad specificity.. With respect to regulation, allosterically activated by HslU binding. Protease subunit of a proteasome-like degradation complex believed to be a general protein degrading machinery. The sequence is that of ATP-dependent protease subunit HslV from Thioalkalivibrio sulfidiphilus (strain HL-EbGR7).